The following is a 613-amino-acid chain: Probable potassium transport system protein Kup 1 (613 aa).

A run of 12 helical transmembrane segments spans residues 40-60 (VLSM…VVFV), 93-113 (MLLG…TPAI), 127-147 (PALQ…LFLL), 158-178 (LFGP…LFSV), 201-221 (AVQA…AEAL), 237-257 (WFYI…ALLL), 266-286 (PFFL…ATAA), 288-308 (VIAS…AVHL), 327-347 (IYVP…VLAF), 356-376 (AYGI…TVVM), 384-404 (LPAV…FFGA), and 409-429 (VAAG…LMVT).

This sequence belongs to the HAK/KUP transporter (TC 2.A.72) family.

The protein localises to the cell inner membrane. It catalyses the reaction K(+)(in) + H(+)(in) = K(+)(out) + H(+)(out). Functionally, transport of potassium into the cell. Likely operates as a K(+):H(+) symporter. This Ralstonia nicotianae (strain ATCC BAA-1114 / GMI1000) (Ralstonia solanacearum) protein is Probable potassium transport system protein Kup 1.